We begin with the raw amino-acid sequence, 287 residues long: ATP synthase subunit a (287 aa).

Transmembrane regions (helical) follow at residues 37–57 (LDSVAVSVILGVLGLFVMWLA), 96–116 (FIAPLALTVFVWIFLMNAMDL), 144–164 (DLSTTLGLSSAVLILCFVYSI), 187–207 (PVFALILGVVNLLMQIIEYVA), 224–244 (ELVFMLIALMGGAAAMSLSGV), and 266–286 (TLQAFIFMMLTLIYLGQAHEA).

The protein belongs to the ATPase A chain family. As to quaternary structure, F-type ATPases have 2 components, CF(1) - the catalytic core - and CF(0) - the membrane proton channel. CF(1) has five subunits: alpha(3), beta(3), gamma(1), delta(1), epsilon(1). CF(0) has three main subunits: a(1), b(2) and c(9-12). The alpha and beta chains form an alternating ring which encloses part of the gamma chain. CF(1) is attached to CF(0) by a central stalk formed by the gamma and epsilon chains, while a peripheral stalk is formed by the delta and b chains.

Its subcellular location is the cell inner membrane. Its function is as follows. Key component of the proton channel; it plays a direct role in the translocation of protons across the membrane. The polypeptide is ATP synthase subunit a (Acidovorax ebreus (strain TPSY) (Diaphorobacter sp. (strain TPSY))).